The chain runs to 117 residues: Holo-[acyl-carrier-protein] synthase (117 aa).

D8 and E58 together coordinate Mg(2+).

It belongs to the P-Pant transferase superfamily. AcpS family. It depends on Mg(2+) as a cofactor.

The protein localises to the cytoplasm. It carries out the reaction apo-[ACP] + CoA = holo-[ACP] + adenosine 3',5'-bisphosphate + H(+). In terms of biological role, transfers the 4'-phosphopantetheine moiety from coenzyme A to a Ser of acyl-carrier-protein. The protein is Holo-[acyl-carrier-protein] synthase of Latilactobacillus sakei subsp. sakei (strain 23K) (Lactobacillus sakei subsp. sakei).